We begin with the raw amino-acid sequence, 160 residues long: SsrA-binding protein (160 aa).

It belongs to the SmpB family.

It is found in the cytoplasm. In terms of biological role, required for rescue of stalled ribosomes mediated by trans-translation. Binds to transfer-messenger RNA (tmRNA), required for stable association of tmRNA with ribosomes. tmRNA and SmpB together mimic tRNA shape, replacing the anticodon stem-loop with SmpB. tmRNA is encoded by the ssrA gene; the 2 termini fold to resemble tRNA(Ala) and it encodes a 'tag peptide', a short internal open reading frame. During trans-translation Ala-aminoacylated tmRNA acts like a tRNA, entering the A-site of stalled ribosomes, displacing the stalled mRNA. The ribosome then switches to translate the ORF on the tmRNA; the nascent peptide is terminated with the 'tag peptide' encoded by the tmRNA and targeted for degradation. The ribosome is freed to recommence translation, which seems to be the essential function of trans-translation. This chain is SsrA-binding protein, found in Sodalis glossinidius (strain morsitans).